The chain runs to 725 residues: Dolichyl-phosphate-mannose--protein mannosyltransferase 5 (725 aa).

Transmembrane regions (helical) follow at residues 34 to 54 (QFAV…LYIP), 117 to 137 (YLWL…LTFF), 145 to 165 (SVIS…VTVS), 192 to 212 (IPFT…LGLN), 219 to 239 (GLFT…EILG), and 256 to 276 (VVAF…IHFE). 3 MIR domains span residues 303–356 (PLQV…IETK), 368–427 (QREV…IRML), and 439–495 (LIKL…VESS). N-linked (GlcNAc...) asparagine glycosylation is present at Asn409. Transmembrane regions (helical) follow at residues 570-590 (IYYL…LIAI), 619-639 (FYNN…PYCL), 644-664 (LYLH…SQYL), and 673-693 (IIGG…FYEF).

This sequence belongs to the glycosyltransferase 39 family.

It is found in the endoplasmic reticulum membrane. The enzyme catalyses a di-trans,poly-cis-dolichyl beta-D-mannosyl phosphate + L-seryl-[protein] = 3-O-(alpha-D-mannosyl)-L-seryl-[protein] + a di-trans,poly-cis-dolichyl phosphate + H(+). The catalysed reaction is a di-trans,poly-cis-dolichyl beta-D-mannosyl phosphate + L-threonyl-[protein] = 3-O-(alpha-D-mannosyl)-L-threonyl-[protein] + a di-trans,poly-cis-dolichyl phosphate + H(+). It participates in protein modification; protein glycosylation. Protein mannosyltransferase (PMT) involved in hyphal morphogenesis and drug sensitivity. Transfers mannose from Dol-P-mannose to Ser or Thr residues on proteins. PMT1, PMT2 and PMT4 account for most of the protein-O-glycosylation activity, while PMT5 and PMT6 may specifically modulate a much narrower spectrum of target proteins. Required for biofilm formation. The polypeptide is Dolichyl-phosphate-mannose--protein mannosyltransferase 5 (Candida albicans (strain SC5314 / ATCC MYA-2876) (Yeast)).